Consider the following 302-residue polypeptide: Calpain-1 catalytic subunit (302 aa).

Residues 1 to 114 (RESGCSFVLA…KRAGTQELDD (114 aa)) are domain III. The interval 115–130 (QIQANLPDEQVLSAEE) is linker. Positions 131–301 (IDENFKALFR…LFKWLQLTMF (171 aa)) are domain IV. 3 EF-hand domains span residues 173 to 206 (FSME…NRIR), 203 to 238 (NRIR…AGFK), and 268 to 302 (VRLE…TMFA). Ca(2+)-binding residues include D186, D188, N190, K192, E197, D216, D218, S220, S222, and E227.

The protein belongs to the peptidase C2 family. Forms a heterodimer with a small (regulatory) subunit CAPNS1. Ca(2+) serves as cofactor. The N-terminus is blocked. In terms of processing, undergoes calcium-induced successive autoproteolytic cleavages that generate a membrane-bound 78 kDa active form and an intracellular 75 kDa active form. Calpastatin reduces with high efficiency the transition from 78 kDa to 75 kDa calpain forms. Ubiquitous.

The protein resides in the cytoplasm. It is found in the cell membrane. It carries out the reaction Broad endopeptidase specificity.. Activated by micromolar concentrations of calcium and inhibited by calpastatin. In terms of biological role, calcium-regulated non-lysosomal thiol-protease which catalyzes limited proteolysis of substrates involved in cytoskeletal remodeling and signal transduction. Proteolytically cleaves CTBP1. Cleaves and activates caspase-7 (CASP7). In Oryctolagus cuniculus (Rabbit), this protein is Calpain-1 catalytic subunit.